We begin with the raw amino-acid sequence, 296 residues long: Protoheme IX farnesyltransferase (296 aa).

The Cytoplasmic portion of the chain corresponds to 1–9 (MMFKQYLQV). Residues 10 to 28 (TKPGIIFGNLISVIGGFLL) form a helical membrane-spanning segment. Residues 29–37 (ASKGSIDYP) are Periplasmic-facing. Residues 38–56 (LFIYTLVGVSLVVASGCVF) form a helical membrane-spanning segment. Residues 57-78 (NNYIDRDIDRKMERTKNRVLVK) are Cytoplasmic-facing. Residues 79 to 97 (GLISPGVSLVYATLLGIAG) traverse the membrane as a helical segment. The Periplasmic portion of the chain corresponds to 98 to 107 (FMLLWFGANP). A helical membrane pass occupies residues 108–126 (LACWLGVMGFVVYVGVYSL). Topologically, residues 127–197 (YMKRHSVYGT…YQAANIPVLP (71 aa)) are cytoplasmic. The chain crosses the membrane as a helical span at residues 198 to 216 (VIKGISVAKNHITLYIIAF). Residues 217-228 (AVATLMLTLGGY) lie on the Periplasmic side of the membrane. The helical transmembrane segment at 229-247 (AGYKYLVVAAAVSVWWLGM) threads the bilayer. Residues 248–268 (ALRGYKVEDDKVWARKLFGFS) lie on the Cytoplasmic side of the membrane. A helical membrane pass occupies residues 269 to 287 (IIAITALSIMMSVDFMVPN). Over 288–296 (SQNLLTYVW) the chain is Periplasmic.

It belongs to the UbiA prenyltransferase family. Protoheme IX farnesyltransferase subfamily.

The protein localises to the cell inner membrane. The enzyme catalyses heme b + (2E,6E)-farnesyl diphosphate + H2O = Fe(II)-heme o + diphosphate. It functions in the pathway porphyrin-containing compound metabolism; heme O biosynthesis; heme O from protoheme: step 1/1. Functionally, converts heme B (protoheme IX) to heme O by substitution of the vinyl group on carbon 2 of heme B porphyrin ring with a hydroxyethyl farnesyl side group. The polypeptide is Protoheme IX farnesyltransferase (Salmonella typhi).